A 349-amino-acid chain; its full sequence is Protein O-mannose kinase (349 aa).

Residues 1–19 (MGQQHGARNGLTHRELPRG) are Cytoplasmic-facing. A helical; Signal-anchor for type II membrane protein transmembrane segment spans residues 20 to 42 (MGLLLAMALMNVVLYVCLDHLFI). Over 43-349 (SPGRATEDPR…TVMSQTKEML (307 aa)) the chain is Lumenal. N-linked (GlcNAc...) asparagine glycosylation is found at Asn-66, Asn-164, and Asn-219. The 270-residue stretch at 80–349 (VRQLKLVGEG…TVMSQTKEML (270 aa)) folds into the Protein kinase domain.

Belongs to the protein kinase superfamily. Ser/Thr protein kinase family. STKL subfamily.

The protein localises to the endoplasmic reticulum membrane. The enzyme catalyses 3-O-[beta-D-GalNAc-(1-&gt;3)-beta-D-GlcNAc-(1-&gt;4)-alpha-D-Man]-L-Thr-[protein] + ATP = 3-O-[beta-D-GalNAc-(1-&gt;3)-beta-D-GlcNAc-(1-&gt;4)-(O-6-P-alpha-D-Man)]-Thr-[protein] + ADP + H(+). Functionally, protein O-mannose kinase that specifically mediates phosphorylation at the 6-position of an O-mannose of the trisaccharide (N-acetylgalactosamine (GalNAc)-beta-1,3-N-acetylglucosamine (GlcNAc)-beta-1,4-mannose) to generate phosphorylated O-mannosyl trisaccharide (N-acetylgalactosamine-beta-1,3-N-acetylglucosamine-beta-1,4-(phosphate-6-)mannose). Phosphorylated O-mannosyl trisaccharide is a carbohydrate structure present in alpha-dystroglycan (DAG1), which is required for binding laminin G-like domain-containing extracellular proteins with high affinity. Only shows kinase activity when the GalNAc-beta-3-GlcNAc-beta-terminus is linked to the 4-position of O-mannose, suggesting that this disaccharide serves as the substrate recognition motif. The polypeptide is Protein O-mannose kinase (Pomk) (Rattus norvegicus (Rat)).